A 184-amino-acid chain; its full sequence is Rhox homeobox family member 1 (184 aa).

The disordered stretch occupies residues 26–104 (QLGAASSAEG…GPQPENMQPR (79 aa)). The segment covering 88-99 (PAQAAMEGPQPE) has biased composition (low complexity). The homeobox DNA-binding region spans 103–162 (PRTRRTKFTLLQVEELESVFRHTQYPDVPTRRELAENLGVTEDKVRVWFKNKRARCRRHQ). A Nuclear localization signal motif is present at residues 155–164 (RARCRRHQRE).

This sequence belongs to the paired-like homeobox family. PEPP subfamily. As to quaternary structure, does not interact with itself. As to expression, ovary, testis and epididymis. Also detected in the prostate and the mammary gland. Expressed in many tumor cell lines derived from acute lymphocytic leukemia, prostate, endometrial adenocarcinoma, melanoma, bladder carcinoma, colon carcinoma, erythroleukemia and breast carcinoma. Not expressed in placenta. In testis, mainly expressed in germ cells, but also detected in somatic cells such as Sertoli cells, Leydig cells and peritubular cells.

The protein resides in the nucleus. Transcription factor maybe involved in reproductive processes. Modulates expression of target genes encoding proteins involved in processes relevant to spermatogenesis. In Homo sapiens (Human), this protein is Rhox homeobox family member 1.